A 476-amino-acid polypeptide reads, in one-letter code: Glutamate--tRNA ligase 1 (476 aa).

Residues 9 to 19 carry the 'HIGH' region motif; it reads PSPTGFLHIGG. Residues 238–242 carry the 'KMSKS' region motif; the sequence is KLSKR. Position 241 (K241) interacts with ATP.

This sequence belongs to the class-I aminoacyl-tRNA synthetase family. Glutamate--tRNA ligase type 1 subfamily. As to quaternary structure, monomer.

The protein localises to the cytoplasm. The enzyme catalyses tRNA(Glu) + L-glutamate + ATP = L-glutamyl-tRNA(Glu) + AMP + diphosphate. Catalyzes the attachment of glutamate to tRNA(Glu) in a two-step reaction: glutamate is first activated by ATP to form Glu-AMP and then transferred to the acceptor end of tRNA(Glu). The polypeptide is Glutamate--tRNA ligase 1 (Bartonella bacilliformis (strain ATCC 35685 / KC583 / Herrer 020/F12,63)).